Here is a 132-residue protein sequence, read N- to C-terminus: Small ribosomal subunit protein uS8 (132 aa).

It belongs to the universal ribosomal protein uS8 family. As to quaternary structure, part of the 30S ribosomal subunit. Contacts proteins S5 and S12.

Functionally, one of the primary rRNA binding proteins, it binds directly to 16S rRNA central domain where it helps coordinate assembly of the platform of the 30S subunit. This chain is Small ribosomal subunit protein uS8, found in Renibacterium salmoninarum (strain ATCC 33209 / DSM 20767 / JCM 11484 / NBRC 15589 / NCIMB 2235).